The chain runs to 122 residues: Large ribosomal subunit protein uL14 (122 aa).

This sequence belongs to the universal ribosomal protein uL14 family. Part of the 50S ribosomal subunit. Forms a cluster with proteins L3 and L19. In the 70S ribosome, L14 and L19 interact and together make contacts with the 16S rRNA in bridges B5 and B8.

Functionally, binds to 23S rRNA. Forms part of two intersubunit bridges in the 70S ribosome. The protein is Large ribosomal subunit protein uL14 of Caulobacter vibrioides (strain ATCC 19089 / CIP 103742 / CB 15) (Caulobacter crescentus).